The chain runs to 1451 residues: DNA excision repair protein ERCC-6-like (1451 aa).

The stretch at 27–60 (YDRYRQKGKEAALNGELPRALELFQLAYQLQPSE) is one TPR 1 repeat. Residues 118–286 (SLYRDGRKGG…WALFDFACQG (169 aa)) form the Helicase ATP-binding domain. 131 to 138 (DDMGLGKT) contacts ATP. The DEAH box motif lies at 237-240 (DEAH). One can recognise a Helicase C-terminal domain in the interval 479 to 639 (FVVSLMECLR…PFRYFSKQEL (161 aa)). Disordered regions lie at residues 647 to 669 (DTRS…RSDT), 778 to 804 (NSFD…ETAS), 935 to 1006 (DDTS…ATTD), 1035 to 1054 (DEEV…EFQL), 1063 to 1083 (LEEP…NYND), 1096 to 1140 (RSTP…LTSS), and 1182 to 1343 (LLEN…SAEL). Acidic residues predominate over residues 781–804 (DEPEFEEDEQNLPSAEDAEMETAS). Composition is skewed to polar residues over residues 944-964 (SDFN…SPSL) and 992-1002 (QVLSSPLSQHE). Ser961 carries the phosphoserine modification. Residues 1035 to 1050 (DEEVHEVEESAAEESP) are compositionally biased toward acidic residues. The span at 1063-1074 (LEEPSINHDKQN) shows a compositional bias: basic and acidic residues. The span at 1121–1132 (DTEEEEEEEEES) shows a compositional bias: acidic residues. Positions 1213-1230 (VQTSSGDNSKSYETSEAN) are enriched in polar residues. A compositionally biased stretch (basic and acidic residues) spans 1244-1278 (YREGKNTSDKVSESNETHSEEFAEEEKPSGDKSES). A compositionally biased stretch (acidic residues) spans 1310–1341 (SEADESVVEEEEPSGETLNTEESEMGEEEESA). The stretch at 1402 to 1435 (YNLLVLSGKQSLAEGRKQEALDFFLKAIDINTGD) is one TPR 2 repeat.

This sequence belongs to the SNF2/RAD54 helicase family.

Its subcellular location is the chromosome. The protein resides in the centromere. It localises to the kinetochore. The catalysed reaction is ATP + H2O = ADP + phosphate + H(+). Its function is as follows. DNA helicase that acts as a tension sensor that associates with catenated DNA which is stretched under tension until it is resolved during anaphase. Functions as ATP-dependent DNA translocase. Can promote Holliday junction branch migration (in vitro). The sequence is that of DNA excision repair protein ERCC-6-like (ercc6l) from Danio rerio (Zebrafish).